The following is a 351-amino-acid chain: Phosphate acyltransferase (351 aa).

Belongs to the PlsX family. Homodimer. Probably interacts with PlsY.

Its subcellular location is the cytoplasm. It catalyses the reaction a fatty acyl-[ACP] + phosphate = an acyl phosphate + holo-[ACP]. The protein operates within lipid metabolism; phospholipid metabolism. Catalyzes the reversible formation of acyl-phosphate (acyl-PO(4)) from acyl-[acyl-carrier-protein] (acyl-ACP). This enzyme utilizes acyl-ACP as fatty acyl donor, but not acyl-CoA. This is Phosphate acyltransferase from Gloeothece citriformis (strain PCC 7424) (Cyanothece sp. (strain PCC 7424)).